The following is a 191-amino-acid chain: Fe/S biogenesis protein NfuA (191 aa).

Positions 149 and 152 each coordinate [4Fe-4S] cluster.

This sequence belongs to the NfuA family. Homodimer. It depends on [4Fe-4S] cluster as a cofactor.

Involved in iron-sulfur cluster biogenesis. Binds a 4Fe-4S cluster, can transfer this cluster to apoproteins, and thereby intervenes in the maturation of Fe/S proteins. Could also act as a scaffold/chaperone for damaged Fe/S proteins. In Hamiltonella defensa subsp. Acyrthosiphon pisum (strain 5AT), this protein is Fe/S biogenesis protein NfuA.